Here is a 228-residue protein sequence, read N- to C-terminus: UPF0173 metal-dependent hydrolase ABC2731 (228 aa).

This sequence belongs to the UPF0173 family.

The polypeptide is UPF0173 metal-dependent hydrolase ABC2731 (Shouchella clausii (strain KSM-K16) (Alkalihalobacillus clausii)).